A 129-amino-acid polypeptide reads, in one-letter code: ASNFTQFVLVNDGGTGNVTVAPSNFANGVAEWISSNSRSQAYKVTCSVRQSSAQNRKYTIKVEVPKVATQTVGGVELPVAAWRSYLNMELTIPIFATNSDCELIVKAMQGLLKDGNPIPSAIAANSGIY.

A viral RNA-binding region spans residues 31 to 104 (EWISSNSRSQ…FATNSDCELI (74 aa)).

Belongs to the Leviviricetes capsid protein family. Homodimer. The capsid proteins form dimers that assemble by group of 5. Twelve such pentamers are linked together with free dimers. The homodimers binds to the viral RNA via an operator hairpin, but also to many other RNA sequences in the viral genome; this interaction probably shifts the virus from the replicative to the assembly phase and ensures specific encapsidation of the viral genome.

It is found in the virion. Functionally, capsid protein self-assembles to form an icosahedral capsid with a T=3 symmetry, about 26 nm in diameter, and consisting of 89 capsid proteins dimers (178 capsid proteins). Involved in viral genome encapsidation through the interaction between a capsid protein dimer and the multiple packaging signals present in the RNA genome. The capsid also contains 1 copy of the A2 maturation protein. Acts as a translational repressor of viral replicase synthesis late in infection. This latter function is the result of capsid protein interaction with an RNA hairpin which contains the replicase ribosome-binding site. This Escherichia coli (Bacteriophage R17) protein is Capsid protein.